We begin with the raw amino-acid sequence, 72 residues long: High-potential iron-sulfur protein isozyme 1 (72 aa).

A1 is subject to N-carbamoylalanine; partial. [4Fe-4S] cluster is bound by residues C34, C37, C51, and C65.

The protein belongs to the high-potential iron-sulfur protein (HiPIP) family. In terms of assembly, homodimer.

Specific class of high-redox-potential 4Fe-4S ferredoxins. Functions in anaerobic electron transport in most purple and in some other photosynthetic bacteria and in at least one genus (Paracoccus) of halophilic, denitrifying bacteria. This chain is High-potential iron-sulfur protein isozyme 1, found in Ectothiorhodospira mobilis.